Consider the following 218-residue polypeptide: Thiopurine S-methyltransferase (218 aa).

Positions 10, 45, 66, and 123 each coordinate S-adenosyl-L-methionine.

Belongs to the class I-like SAM-binding methyltransferase superfamily. TPMT family.

Its subcellular location is the cytoplasm. The enzyme catalyses S-adenosyl-L-methionine + a thiopurine = S-adenosyl-L-homocysteine + a thiopurine S-methylether.. In Shewanella oneidensis (strain ATCC 700550 / JCM 31522 / CIP 106686 / LMG 19005 / NCIMB 14063 / MR-1), this protein is Thiopurine S-methyltransferase.